Here is a 138-residue protein sequence, read N- to C-terminus: Large ribosomal subunit protein uL16 (138 aa).

It belongs to the universal ribosomal protein uL16 family. In terms of assembly, part of the 50S ribosomal subunit.

In terms of biological role, binds 23S rRNA and is also seen to make contacts with the A and possibly P site tRNAs. The chain is Large ribosomal subunit protein uL16 from Acholeplasma laidlawii (strain PG-8A).